The following is a 215-amino-acid chain: Guanylate kinase (215 aa).

A Guanylate kinase-like domain is found at 9–187; the sequence is GTLYIVSAPS…ALDELSCLVH (179 aa). An ATP-binding site is contributed by 16–23; the sequence is APSGAGKT.

This sequence belongs to the guanylate kinase family.

It is found in the cytoplasm. It carries out the reaction GMP + ATP = GDP + ADP. In terms of biological role, essential for recycling GMP and indirectly, cGMP. In Chromohalobacter salexigens (strain ATCC BAA-138 / DSM 3043 / CIP 106854 / NCIMB 13768 / 1H11), this protein is Guanylate kinase.